The sequence spans 435 residues: 5-hydroxybenzimidazole synthase (435 aa).

Substrate-binding positions include methionine 95, tyrosine 124, histidine 163, 186–188 (SKG), 227–230 (NGLR), and glutamate 266. Histidine 270 is a binding site for Zn(2+). Tyrosine 293 is a binding site for substrate. Residue histidine 334 coordinates Zn(2+). [4Fe-4S] cluster contacts are provided by cysteine 410, cysteine 413, and cysteine 417.

It belongs to the ThiC family. 5-hydroxybenzimidazole synthase subfamily. As to quaternary structure, homodimer. It depends on [4Fe-4S] cluster as a cofactor.

It carries out the reaction 5-amino-1-(5-phospho-beta-D-ribosyl)imidazole + AH2 + S-adenosyl-L-methionine = 5-hydroxybenzimidazole + 5'-deoxyadenosine + formate + L-methionine + A + NH4(+) + phosphate + 2 H(+). Its function is as follows. Catalyzes the conversion of aminoimidazole ribotide (AIR) to 5-hydroxybenzimidazole (5-HBI) in a radical S-adenosyl-L-methionine (SAM)-dependent reaction. Is thus involved in the anaerobic biosynthesis of the benzimidazole lower axial ligand of the cobamide produced by G.metallireducens. This Geobacter metallireducens (strain ATCC 53774 / DSM 7210 / GS-15) protein is 5-hydroxybenzimidazole synthase.